A 946-amino-acid chain; its full sequence is Serine/threonine-protein kinase PLK4 (946 aa).

In terms of domain architecture, Protein kinase spans 12 to 265; it reads FKVLNLLGKG…LSSVLDHAFM (254 aa). Residues 18 to 26 and K41 contribute to the ATP site; that span reads LGKGSFACV. Catalysis depends on D136, which acts as the Proton acceptor. The segment at 330-395 is disordered; the sequence is HPAERSNGGS…TYGKPSSFSE (66 aa). Polar residues predominate over residues 378-394; that stretch reads RSGTSQSQTYGKPSSFS. The 114-residue stretch at 566–679 folds into the Cryptic POLO box 1 (CPB1) domain; that stretch reads TLRSIISPLN…AKFIQLVRSK (114 aa). The region spanning 680–792 is the Cryptic POLO box 2 (CPB2) domain; that stretch reads MPKVTYYTRY…GRRPAITESP (113 aa). The segment at 789–828 is disordered; the sequence is TESPRTQLTVDSARERKDEQSSANRVLHSSATSPPQIPNI. Positions 809 to 828 are enriched in polar residues; it reads SSANRVLHSSATSPPQIPNI. The POLO box domain maps to 864 to 942; it reads QVLKSVFVEN…LSSILMLFAS (79 aa).

It belongs to the protein kinase superfamily. Ser/Thr protein kinase family. CDC5/Polo subfamily. Homodimer. Ubiquitinated; leading to its degradation by the proteasome.

It is found in the cytoplasm. It localises to the cytoskeleton. Its subcellular location is the microtubule organizing center. The protein resides in the centrosome. The protein localises to the centriole. It catalyses the reaction L-seryl-[protein] + ATP = O-phospho-L-seryl-[protein] + ADP + H(+). The enzyme catalyses L-threonyl-[protein] + ATP = O-phospho-L-threonyl-[protein] + ADP + H(+). Its function is as follows. Serine/threonine-protein kinase that plays a central role in centriole duplication. Able to trigger procentriole formation on the surface of the parental centriole cylinder, leading to the recruitment of centriole biogenesis proteins such as sass6, cpap, ccp110, cep135 and gamma-tubulin. When overexpressed, it is able to induce centrosome amplification through the simultaneous generation of multiple procentrioles adjoining each parental centriole during S phase. Its central role in centriole replication suggests a possible role in tumorigenesis, centrosome aberrations being frequently observed in tumors. Also involved in deuterosome-mediated centriole amplification in multiciliated that can generate more than 100 centrioles. The polypeptide is Serine/threonine-protein kinase PLK4 (Xenopus tropicalis (Western clawed frog)).